The primary structure comprises 370 residues: Calcium/calmodulin-dependent protein kinase type 1 (370 aa).

The 257-residue stretch at 20–276 folds into the Protein kinase domain; the sequence is YDFRDVLGTG…CEQALQHPWI (257 aa). Residues 26 to 34 and Lys-49 each bind ATP; that span reads LGTGAFSEV. Lys-59 is covalently cross-linked (Glycyl lysine isopeptide (Lys-Gly) (interchain with G-Cter in ubiquitin)). Catalysis depends on Asp-141, which acts as the Proton acceptor. Thr-177 is modified (phosphothreonine; by CaMKK1 and CaMKK2). The tract at residues 276–316 is autoinhibitory domain; sequence IAGDTALDKNIHQSVSEQIKKNFAKSKWKQAFNATAVVRHM. The segment at 296-317 is calmodulin-binding; that stretch reads KNFAKSKWKQAFNATAVVRHMR. The Nuclear export signal signature appears at 315–321; sequence HMRKLQL. Residue Ser-363 is modified to Phosphoserine.

Belongs to the protein kinase superfamily. CAMK Ser/Thr protein kinase family. CaMK subfamily. As to quaternary structure, monomer. Interacts with XPO1. Interacts with MARK2, ARHGEF7/BETAPIX and GIT1. In terms of processing, phosphorylated by CaMKK1 and CaMKK2 on Thr-177. Post-translationally, polybiquitinated by the E3 ubiquitin-protein ligase complex SCF(FBXL12), leading to proteasomal degradation. Widely expressed. Expressed in cells of the zona glomerulosa of the adrenal cortex.

The protein resides in the cytoplasm. Its subcellular location is the nucleus. The enzyme catalyses L-seryl-[protein] + ATP = O-phospho-L-seryl-[protein] + ADP + H(+). It carries out the reaction L-threonyl-[protein] + ATP = O-phospho-L-threonyl-[protein] + ADP + H(+). Activated by Ca(2+)/calmodulin. Binding of calmodulin results in conformational change that relieves intrasteric autoinhibition and allows phosphorylation of Thr-177 within the activation loop by CaMKK1 or CaMKK2. Phosphorylation of Thr-177 results in several fold increase in total activity. Unlike CaMK4, is unable to exhibit autonomous activity after Ca(2+)/calmodulin activation. Calcium/calmodulin-dependent protein kinase that operates in the calcium-triggered CaMKK-CaMK1 signaling cascade and, upon calcium influx, regulates transcription activators activity, cell cycle, hormone production, cell differentiation, actin filament organization and neurite outgrowth. Recognizes the substrate consensus sequence [MVLIF]-x-R-x(2)-[ST]-x(3)-[MVLIF]. Regulates axonal extension and growth cone motility in hippocampal and cerebellar nerve cells. Upon NMDA receptor-mediated Ca(2+) elevation, promotes dendritic growth in hippocampal neurons and is essential in synapses for full long-term potentiation (LTP) and ERK2-dependent translational activation. Downstream of NMDA receptors, promotes the formation of spines and synapses in hippocampal neurons by phosphorylating ARHGEF7/BETAPIX on 'Ser-694', which results in the enhancement of ARHGEF7 activity and activation of RAC1. Promotes neuronal differentiation and neurite outgrowth by activation and phosphorylation of MARK2 on 'Ser-91', 'Ser-92', 'Ser-93' and 'Ser-294'. Promotes nuclear export of HDAC5 and binding to 14-3-3 by phosphorylation of 'Ser-259' and 'Ser-498' in the regulation of muscle cell differentiation. Regulates NUMB-mediated endocytosis by phosphorylation of NUMB on 'Ser-276' and 'Ser-295'. Involved in the regulation of basal and estrogen-stimulated migration of medulloblastoma cells through ARHGEF7/BETAPIX phosphorylation. Is required for proper activation of cyclin-D1/CDK4 complex during G1 progression in diploid fibroblasts. Plays a role in K(+) and ANG2-mediated regulation of the aldosterone synthase (CYP11B2) to produce aldosterone in the adrenal cortex. Phosphorylates EIF4G3/eIF4GII. In vitro phosphorylates CREB1, ATF1, CFTR, MYL9 and SYN1/synapsin I. This chain is Calcium/calmodulin-dependent protein kinase type 1 (CAMK1), found in Homo sapiens (Human).